The chain runs to 691 residues: DNA-directed RNA polymerase subunit beta' (691 aa).

Belongs to the RNA polymerase beta' chain family. RpoC1 subfamily. In terms of assembly, in plastids the minimal PEP RNA polymerase catalytic core is composed of four subunits: alpha, beta, beta', and beta''. When a (nuclear-encoded) sigma factor is associated with the core the holoenzyme is formed, which can initiate transcription.

The protein resides in the plastid. The catalysed reaction is RNA(n) + a ribonucleoside 5'-triphosphate = RNA(n+1) + diphosphate. DNA-dependent RNA polymerase catalyzes the transcription of DNA into RNA using the four ribonucleoside triphosphates as substrates. The protein is DNA-directed RNA polymerase subunit beta' (rpoC1) of Cuscuta reflexa (Southern Asian dodder).